A 146-amino-acid chain; its full sequence is Flavodoxin (146 aa).

A Flavodoxin-like domain is found at 4 to 143 (ALIVYGSTTG…EVLDWAREVL (140 aa)).

Belongs to the flavodoxin family. FMN is required as a cofactor.

Its function is as follows. Electron-transfer proteins that function in various electron transport systems in microorganisms. Functionally interchangeable with ferredoxin. The protein is Flavodoxin of Megalodesulfovibrio gigas (strain ATCC 19364 / DSM 1382 / NCIMB 9332 / VKM B-1759) (Desulfovibrio gigas).